The sequence spans 165 residues: C-phycoerythrin class 2 subunit alpha (165 aa).

Cys-75 contributes to the phycourobilin binding site. Residues Cys-83 and Cys-140 each coordinate (2R,3E)-phycoerythrobilin.

This sequence belongs to the phycobiliprotein family. In terms of assembly, heterodimer of an alpha and a beta chain. Post-translationally, contains two covalently linked phycoerythrobilin chromophores and one covalently linked phycourobilin chromophore.

The protein resides in the cellular thylakoid membrane. Functionally, light-harvesting photosynthetic bile pigment-protein from the phycobiliprotein complex. The chain is C-phycoerythrin class 2 subunit alpha (mpeA) from Synechococcus sp. (strain WH8020).